Consider the following 488-residue polypeptide: Cobyric acid synthase (488 aa).

A GATase cobBQ-type domain is found at 247–440 (LLRVIVPVLP…VHGVFDEPTA (194 aa)). The Nucleophile role is filled by Cys328. The active site involves His432.

This sequence belongs to the CobB/CobQ family. CobQ subfamily.

Its pathway is cofactor biosynthesis; adenosylcobalamin biosynthesis. In terms of biological role, catalyzes amidations at positions B, D, E, and G on adenosylcobyrinic A,C-diamide. NH(2) groups are provided by glutamine, and one molecule of ATP is hydrogenolyzed for each amidation. The polypeptide is Cobyric acid synthase (Cupriavidus pinatubonensis (strain JMP 134 / LMG 1197) (Cupriavidus necator (strain JMP 134))).